The primary structure comprises 382 residues: Secreted RxLR effector protein 118 (382 aa).

The N-terminal stretch at 1-21 is a signal peptide; sequence MRGAYYVTIALLVVASSQISA. A RxLR-dEER motif is present at residues 48–65; sequence RSLRGSRDVSNDVAIEER. The disordered stretch occupies residues 308-382; it reads MNKASTSKGK…AVTSLSSISN (75 aa). Over residues 310–323 the composition is skewed to polar residues; sequence KASTSKGKSSVFTR.

The protein belongs to the RxLR effector family.

The protein localises to the secreted. Its subcellular location is the host nucleus. Secreted effector that completely suppresses the host cell death induced by cell death-inducing proteins. The chain is Secreted RxLR effector protein 118 from Plasmopara viticola (Downy mildew of grapevine).